A 1211-amino-acid chain; its full sequence is DNA-directed RNA polymerase subunit beta' (1211 aa).

Residues Cys-60, Cys-62, Cys-75, and Cys-78 each coordinate Zn(2+). Positions 450, 452, and 454 each coordinate Mg(2+). Cys-819, Cys-893, Cys-900, and Cys-903 together coordinate Zn(2+).

This sequence belongs to the RNA polymerase beta' chain family. In terms of assembly, the RNAP catalytic core consists of 2 alpha, 1 beta, 1 beta' and 1 omega subunit. When a sigma factor is associated with the core the holoenzyme is formed, which can initiate transcription. Mg(2+) is required as a cofactor. The cofactor is Zn(2+).

The catalysed reaction is RNA(n) + a ribonucleoside 5'-triphosphate = RNA(n+1) + diphosphate. In terms of biological role, DNA-dependent RNA polymerase catalyzes the transcription of DNA into RNA using the four ribonucleoside triphosphates as substrates. This is DNA-directed RNA polymerase subunit beta' from Streptococcus equi subsp. equi (strain 4047).